The chain runs to 348 residues: RNA 3'-terminal phosphate cyclase (348 aa).

ATP-binding positions include Q102 and 285-288 (HMGD). Residue H311 is the Tele-AMP-histidine intermediate of the active site.

Belongs to the RNA 3'-terminal cyclase family. Type 1 subfamily.

Its subcellular location is the cytoplasm. It carries out the reaction a 3'-end 3'-phospho-ribonucleotide-RNA + ATP = a 3'-end 2',3'-cyclophospho-ribonucleotide-RNA + AMP + diphosphate. Functionally, catalyzes the conversion of 3'-phosphate to a 2',3'-cyclic phosphodiester at the end of RNA. The mechanism of action of the enzyme occurs in 3 steps: (A) adenylation of the enzyme by ATP; (B) transfer of adenylate to an RNA-N3'P to produce RNA-N3'PP5'A; (C) and attack of the adjacent 2'-hydroxyl on the 3'-phosphorus in the diester linkage to produce the cyclic end product. The biological role of this enzyme is unknown but it is likely to function in some aspects of cellular RNA processing. The polypeptide is RNA 3'-terminal phosphate cyclase (Korarchaeum cryptofilum (strain OPF8)).